A 436-amino-acid polypeptide reads, in one-letter code: Trigger factor (436 aa).

The PPIase FKBP-type domain occupies 161 to 246 (DLRVNMDFVG…LNKVEKQDLP (86 aa)).

Belongs to the FKBP-type PPIase family. Tig subfamily.

Its subcellular location is the cytoplasm. The enzyme catalyses [protein]-peptidylproline (omega=180) = [protein]-peptidylproline (omega=0). Its function is as follows. Involved in protein export. Acts as a chaperone by maintaining the newly synthesized protein in an open conformation. Functions as a peptidyl-prolyl cis-trans isomerase. In Tolumonas auensis (strain DSM 9187 / NBRC 110442 / TA 4), this protein is Trigger factor.